A 130-amino-acid chain; its full sequence is Small ribosomal subunit protein uS9 (130 aa).

This sequence belongs to the universal ribosomal protein uS9 family.

The sequence is that of Small ribosomal subunit protein uS9 from Cupriavidus taiwanensis (strain DSM 17343 / BCRC 17206 / CCUG 44338 / CIP 107171 / LMG 19424 / R1) (Ralstonia taiwanensis (strain LMG 19424)).